Reading from the N-terminus, the 60-residue chain is Large ribosomal subunit protein bL32 (60 aa).

The protein belongs to the bacterial ribosomal protein bL32 family.

This chain is Large ribosomal subunit protein bL32, found in Ehrlichia ruminantium (strain Gardel).